Consider the following 1342-residue polypeptide: Zinc finger protein 335 (1342 aa).

Disordered stretches follow at residues 1–102 (MEEN…VTGG) and 201–228 (TSTS…AEEP). A compositionally biased stretch (low complexity) spans 34-49 (AVSADSSDAAAAPGQA). Over residues 201-217 (TSTSTCLEAQGGPSSPV) the composition is skewed to polar residues. The C2H2-type 1 zinc finger occupies 245-268 (FKCKMCQYRSSTKATLLRHMRERH). The segment at 274-442 (AAAAAAGKKG…TLPRRRGRPS (169 aa)) is disordered. The segment covering 297–327 (EEGPEEEDDDDIVDAGAIDDLEEDSDYNPAE) has biased composition (acidic residues). Basic residues predominate over residues 346–357 (RPRRRPGRPRKL). 8 consecutive C2H2-type zinc fingers follow at residues 465 to 487 (FLCR…VNSH), 495 to 517 (FKCL…MFNH), 523 to 545 (YKCD…AAVH), 562 to 584 (FPCP…MKTH), 590 to 612 (HMCD…LLTH), 621 to 643 (FKCE…QLSH), 649 to 672 (FKCS…AVKH), and 678 to 701 (FACE…RCRH). Disordered regions lie at residues 732 to 763 (LKQQ…QSSE) and 964 to 1013 (CGGL…SAAT). A compositionally biased stretch (pro residues) spans 740-753 (PGPPPSSPGPPEIP). Residues Ser976, Ser992, and Ser1007 each carry the phosphoserine modification. Residues 986 to 997 (SQSSASSPPATS) show a composition bias toward low complexity. C2H2-type zinc fingers lie at residues 1019 to 1041 (FSCK…KRAH), 1047 to 1069 (FKCP…MAQH), 1075 to 1097 (HQCS…MLTH), and 1103 to 1126 (FACH…QRLH). Lys1022 is covalently cross-linked (Glycyl lysine isopeptide (Lys-Gly) (interchain with G-Cter in SUMO2)). The tract at residues 1041–1342 (HAGPGAFKCP…EYDVITLADD (302 aa)) is involved in the interaction with CCAR2. Ser1153 is subject to Phosphoserine.

The protein belongs to the krueppel C2H2-type zinc-finger protein family. In terms of assembly, interacts with NCOA6; may enhance ligand-dependent transcriptional activation by nuclear hormone receptors. Interacts with CNOT6. Interacts with CNOT9; the interaction is direct. Component of a nuclear receptor-mediated transcription complex composed of at least ZNF335, CCAR2 and EMSY; the complex stimulates the transcription of nuclear receptor target genes such as SOX9 and HOXA1. Within the complex interacts with EMSY and interacts (via C-terminus) with CCAR2. Interacts with members of histone H3'Lys4'(H3K4) methyltransferase complexes ASH2L, CXXC1, KMT2A/MLL1, RBBP5, SETD1A and WDR5. Component of a histone methylation complex composed of at least ZNF335, RBBP5, ASH2L and WDR5; the complex may have histone H3-specific methyltransferase activity, however does not have specificity for 'Lys-4' of histone H3. Interacts with RBBP5 and WDR5. Interacts with ASHL2. Components of this complex may associate with components of the ZNF335-CCAR2-EMSY nuclear receptor-mediated transcription complex to form a complex at least composed of ZNF335, HCFC1, CCAR2, EMSY, MKI67, RBBP5, ASH2L and WDR5. Within this complex also interacts with HCFC1 and MKI67. In terms of tissue distribution, ubiquitously expressed.

It is found in the nucleus. Functionally, component or associated component of some histone methyltransferase complexes may regulate transcription through recruitment of those complexes on gene promoters. Enhances ligand-dependent transcriptional activation by nuclear hormone receptors. Plays an important role in neural progenitor cell proliferation and self-renewal through the regulation of specific genes involved brain development, including REST. Also controls the expression of genes involved in somatic development and regulates, for instance, lymphoblast proliferation. The chain is Zinc finger protein 335 (ZNF335) from Homo sapiens (Human).